The primary structure comprises 85 residues: uncharacterized protein (85 aa).

Residues 17–53 (KKRYEMLVQELLKEDDEEREKILAEELELLLDFLKKA) adopt a coiled-coil conformation.

This is an uncharacterized protein from Archaeoglobus fulgidus (strain ATCC 49558 / DSM 4304 / JCM 9628 / NBRC 100126 / VC-16).